The sequence spans 81 residues: Protein Vpu (81 aa).

The Extracellular segment spans residues 1-7; that stretch reads MQSLQVL. A helical membrane pass occupies residues 8–28; the sequence is AIVALVVATIIAIVVWTIVFI. Residues 29–81 are Cytoplasmic-facing; that stretch reads EYRKILRQRKIDRLINRITERAEDSGNESDGDQEELSALVERGHLAPWDVDDL. Residues 50–81 form a disordered region; that stretch reads AEDSGNESDGDQEELSALVERGHLAPWDVDDL. Residues Ser-53 and Ser-57 each carry the phosphoserine; by host CK2 modification. The span at 53–63 shows a compositional bias: acidic residues; it reads SGNESDGDQEE.

It belongs to the HIV-1 VPU protein family. In terms of assembly, homopentamer. Interacts with host CD4 and BRTC; these interactions induce proteasomal degradation of CD4. Interacts with host BST2; this interaction leads to the degradation of host BST2. Interacts with host FBXW11. Interacts with host AP1M1; this interaction plays a role in the mistrafficking and subsequent degradation of host BST2. Interacts with host RANBP2; this interaction allows Vpu to down-regulate host BLM sumoylation. Phosphorylated by host CK2. This phosphorylation is necessary for interaction with human BTRC and degradation of CD4.

The protein localises to the host membrane. With respect to regulation, ion channel activity is inhibited by hexamethylene amiloride in vitro. Its function is as follows. Enhances virion budding by targeting host CD4 and Tetherin/BST2 to proteasome degradation. Degradation of CD4 prevents any unwanted premature interactions between viral Env and its host receptor CD4 in the endoplasmic reticulum. Degradation of antiretroviral protein Tetherin/BST2 is important for virion budding, as BST2 tethers new viral particles to the host cell membrane. Mechanistically, Vpu bridges either CD4 or BST2 to BTRC, a substrate recognition subunit of the Skp1/Cullin/F-box protein E3 ubiquitin ligase, induces their ubiquitination and subsequent proteasomal degradation. The alteration of the E3 ligase specificity by Vpu seems to promote the degradation of host IKBKB, leading to NF-kappa-B down-regulation and subsequent apoptosis. Acts as a viroporin that forms an oligomeric ion channel in membranes. Modulates the host DNA repair mechanisms to promote degradation of nuclear viral cDNA in cells that are already productively infected in order to suppress immune sensing and proviral hyper-integration (superinfection). Manipulates PML-NBs and modulates SUMOylation of host BLM protein thereby enhancing its DNA-end processing activity toward viral unintegrated linear DNA. Also inhibits RAD52-mediated homologous repair of viral cDNA, preventing the generation of dead-end circular forms of single copies of the long terminal repeat and permitting sustained nucleolytic attack. The chain is Protein Vpu from Human immunodeficiency virus type 1 group M subtype B (isolate YU-2) (HIV-1).